Consider the following 156-residue polypeptide: uncharacterized protein (156 aa).

Positions 1–12 are enriched in pro residues; sequence MSARPSLPPLPA. 2 disordered regions span residues 1–89 and 129–156; these read MSAR…PPPA and PLSP…TMRD. Basic and acidic residues predominate over residues 49-67; sequence ARAEEAGGEEGKREAEAWT.

This is an uncharacterized protein from Homo sapiens (Human).